The primary structure comprises 161 residues: Small ribosomal subunit protein uS8m (161 aa).

This sequence belongs to the universal ribosomal protein uS8 family. In terms of assembly, component of the mitochondrial small ribosomal subunit (mt-SSU). Mature N.crassa 74S mitochondrial ribosomes consist of a small (37S) and a large (54S) subunit. The 37S small subunit contains a 16S ribosomal RNA (16S mt-rRNA) and 32 different proteins. The 54S large subunit contains a 23S rRNA (23S mt-rRNA) and 42 different proteins.

The protein localises to the mitochondrion. Functionally, component of the mitochondrial ribosome (mitoribosome), a dedicated translation machinery responsible for the synthesis of mitochondrial genome-encoded proteins, including at least some of the essential transmembrane subunits of the mitochondrial respiratory chain. The mitoribosomes are attached to the mitochondrial inner membrane and translation products are cotranslationally integrated into the membrane. This chain is Small ribosomal subunit protein uS8m (mrps8), found in Neurospora crassa (strain ATCC 24698 / 74-OR23-1A / CBS 708.71 / DSM 1257 / FGSC 987).